The primary structure comprises 313 residues: D-alanine--D-alanine ligase (313 aa).

The ATP-grasp domain maps to 104 to 304 (KQALVPHGIP…YSDLVEAIIA (201 aa)). Residue 130-187 (PLPRPYVLKPVNEGSSVGVAIVTAEGNYGSPISAASKGPWQEFDQLLAEPFIRGRELT) coordinates ATP. Residues aspartate 255, glutamate 271, and asparagine 273 each contribute to the Mg(2+) site.

Belongs to the D-alanine--D-alanine ligase family. Mg(2+) is required as a cofactor. The cofactor is Mn(2+).

The protein resides in the cytoplasm. The enzyme catalyses 2 D-alanine + ATP = D-alanyl-D-alanine + ADP + phosphate + H(+). The protein operates within cell wall biogenesis; peptidoglycan biosynthesis. Functionally, cell wall formation. The sequence is that of D-alanine--D-alanine ligase from Novosphingobium aromaticivorans (strain ATCC 700278 / DSM 12444 / CCUG 56034 / CIP 105152 / NBRC 16084 / F199).